Here is a 236-residue protein sequence, read N- to C-terminus: Eukaryotic translation initiation factor 3 subunit J (236 aa).

Disordered regions lie at residues 1 to 88 and 188 to 236; these read MADD…LANM and SEKQ…DDFM. A compositionally biased stretch (acidic residues) spans 28–46; sequence GEDDDEDVKESWEDEEEKK. 3 stretches are compositionally biased toward basic and acidic residues: residues 47–58, 68–88, and 188–197; these read DEEKPTKTEAPV, AKLE…LANM, and SEKQKMEKAN. Coiled coils occupy residues 61-112 and 174-209; these read KPNK…LKSA and ADIK…KGKV. Positions 201 to 210 are enriched in basic residues; sequence SAAKAKGKVS.

Belongs to the eIF-3 subunit J family. Component of the eukaryotic translation initiation factor 3 (eIF-3) complex. The eIF-3 complex interacts with pix.

It is found in the cytoplasm. Its function is as follows. Component of the eukaryotic translation initiation factor 3 (eIF-3) complex, which is involved in protein synthesis of a specialized repertoire of mRNAs and, together with other initiation factors, stimulates binding of mRNA and methionyl-tRNAi to the 40S ribosome. The eIF-3 complex specifically targets and initiates translation of a subset of mRNAs involved in cell proliferation. The polypeptide is Eukaryotic translation initiation factor 3 subunit J (Drosophila virilis (Fruit fly)).